Reading from the N-terminus, the 388-residue chain is 2-Hydroxyacid oxidase (388 aa).

Positions 1–21 are disordered; that stretch reads MENQFKNNNNSSSIETSNQFS. The FMN hydroxy acid dehydrogenase domain occupies 26-384; that stretch reads NRLDSFVSVS…NNSIIWDQNK (359 aa). Position 52 (Y52) interacts with glyoxylate. FMN-binding positions include 105 to 107, S134, 156 to 158, and T184; these read PWA and QLY. Residue Y158 coordinates glyoxylate. Residue R193 participates in glyoxylate binding. Positions 255 and 277 each coordinate FMN. Glyoxylate contacts are provided by H279 and R282. The active-site Proton acceptor is the H279. Residues 310–314 and 333–334 contribute to the FMN site; these read DGGIR and GR.

This sequence belongs to the FMN-dependent alpha-hydroxy acid dehydrogenase family. As to quaternary structure, homotetramer. The cofactor is FMN.

The enzyme catalyses glycolate + O2 = glyoxylate + H2O2. The catalysed reaction is a (2S)-2-hydroxycarboxylate + O2 = a 2-oxocarboxylate + H2O2. Its function is as follows. Catalyzes the oxidation of glycolate to glyoxylate, with a reduction of O2 to H2O2. May use other 2-hydroxyacids as substrates. This Dictyostelium discoideum (Social amoeba) protein is 2-Hydroxyacid oxidase (haox).